The chain runs to 421 residues: ATP-dependent RNA helicase RhlB (421 aa).

The Q motif motif lies at 9 to 37; it reads THFADLPINEQVVKALSAANFSHCTPIQA. A Helicase ATP-binding domain is found at 40–216; that stretch reads LPPLLEGNDI…YEHMDNPTHV (177 aa). 53–60 serves as a coordination point for ATP; that stretch reads AQTGTGKT. Residues 162–165 carry the DEAD box motif; it reads DEAD. Residues 240–387 enclose the Helicase C-terminal domain; the sequence is KMALLLSLME…VTEYQADALL (148 aa). The interval 389 to 421 is disordered; sequence DVTPPKPRHKKRMQNGRNPQKRQSSGSRNRRKP. A compositionally biased stretch (polar residues) spans 403 to 415; sequence NGRNPQKRQSSGS.

This sequence belongs to the DEAD box helicase family. RhlB subfamily. Component of the RNA degradosome, which is a multiprotein complex involved in RNA processing and mRNA degradation.

It localises to the cytoplasm. It catalyses the reaction ATP + H2O = ADP + phosphate + H(+). DEAD-box RNA helicase involved in RNA degradation. Has RNA-dependent ATPase activity and unwinds double-stranded RNA. The chain is ATP-dependent RNA helicase RhlB from Pseudoalteromonas atlantica (strain T6c / ATCC BAA-1087).